Reading from the N-terminus, the 191-residue chain is Transcriptional activator GvpE1 (191 aa).

The disordered stretch occupies residues 31 to 51 (SDGASDHADQPPDEGATQRYT). 140–145 (KRKVYR) lines the DNA pocket. Residues 150–181 (EGAFTRIDHMVDQLLLFSLVLKAVMTDCKARQ) form a leucine-zipper region.

Interacts with GvpD.

The protein resides in the cytoplasm. The amount of protein that accumulates is controlled by GvpD; GvpD causes a reduction in the amount of GvpE, preventing accumulation of excessive amounts of gas vesicles. Its function is as follows. Plays a regulatory role in gas vesicle synthesis, activates transcription of the gvpA operon, and probably of the gvpD operon. Gas vesicles are hollow, gas filled proteinaceous nanostructures found in several microbial planktonic microorganisms. They allow positioning of halobacteria at the optimal depth for growth in the poorly aerated, shallow brine pools of their habitat. Expression of a 9.5 kb p-vac DNA fragment containing 2 divergently transcribed regions (gvpD-gvpE-gvpF-gvpG-gvpH-gvpI-gvpJ-gvpK-gvpL-gvpM and gvpA-gvpC-gvpN-gvpO) allows H.volcanii to produce gas vesicles. A similar region restores gas vesicle production in H.halobium without the p-vac locus, but it still has the c-vac locus. The protein is Transcriptional activator GvpE1 (gvpE11) of Halobacterium salinarum (strain ATCC 700922 / JCM 11081 / NRC-1) (Halobacterium halobium).